A 1131-amino-acid polypeptide reads, in one-letter code: Chitin synthase 1 (1131 aa).

Over residues 1–20 (MSDQNNRSRNEYHSNRKNEP) the composition is skewed to basic and acidic residues. Residues 1 to 22 (MSDQNNRSRNEYHSNRKNEPSY) form a disordered region. Phosphoserine is present on residues Ser34, Ser35, Ser270, Ser299, and Ser318. The tract at residues 282 to 305 (YLHDDSRPVNDGKEELDSVKSGYS) is disordered. A Phosphothreonine modification is found at Thr328. Position 358 is a phosphoserine (Ser358). Helical transmembrane passes span 795–815 (FFYLFFNTLISWFSLSSFFLV), 833–853 (VLSVIFLWLYGICTLSTFILS), 866–886 (VLTCVIFAVMMIYMIFCSIFM), 914–934 (IVISLGSTYCLYLISSIIYLQ), 942–962 (FIQYILLSPSYINVLNIYAFC), 1042–1062 (LVIIFWVITNFIIVAVVLETG), and 1101–1121 (ILWLVALSALIRFIGCSIYMI).

This sequence belongs to the chitin synthase family.

The protein resides in the cell membrane. It carries out the reaction [(1-&gt;4)-N-acetyl-beta-D-glucosaminyl](n) + UDP-N-acetyl-alpha-D-glucosamine = [(1-&gt;4)-N-acetyl-beta-D-glucosaminyl](n+1) + UDP + H(+). Its activity is regulated as follows. Requires proteolytic activation. Polymerizes chitin, a structural polymer of the cell wall and septum, by transferring the sugar moiety of UDP-GlcNAc to the non-reducing end of the growing chitin polymer. Required for mitotic division septum formation during adverse conditions. This chain is Chitin synthase 1 (CHS1), found in Saccharomyces cerevisiae (strain ATCC 204508 / S288c) (Baker's yeast).